We begin with the raw amino-acid sequence, 148 residues long: MASKRILKELKDLQKDPPTSCSAGPVAEDMFHWQATIMGPSDSPYSGGVFLVTIHFPPDYPFKPPKVAFRTKVFHPNINSNGSICLDILKEQWSPALTISKVLLSICSLLTDPNPDDPLVPEIAHMYKTDKNKYESTARTWTQKYAMG.

Residues 1–147 (MASKRILKEL…ARTWTQKYAM (147 aa)) enclose the UBC core domain. The Glycyl thioester intermediate role is filled by C85.

The protein belongs to the ubiquitin-conjugating enzyme family. As to quaternary structure, interacts with CHIP. Highest expression in young stems and old leaves. Lowest levels in floral buds, anthers and young leaves.

It participates in protein modification; protein sumoylation. In terms of biological role, accepts the ubiquitin-like protein SUMO/SMT3 from the E1 complex and catalyzes its covalent attachment to other proteins. Mediates the selective degradation of short-lived and abnormal proteins. The sequence is that of SUMO-conjugating enzyme UBC9 (UBC9) from Arabidopsis thaliana (Mouse-ear cress).